The primary structure comprises 195 residues: Nodulin-20a (195 aa).

A signal peptide spans 1–17; that stretch reads MRVVLITLFLFIGAAVA.

It belongs to the nodulin 20 family.

It localises to the symbiosome. The protein resides in the peribacteroid membrane. Its subcellular location is the peribacteroid space. This Glycine max (Soybean) protein is Nodulin-20a (NOD20A).